We begin with the raw amino-acid sequence, 258 residues long: Deoxyribose-phosphate aldolase (258 aa).

Asp-102 serves as the catalytic Proton donor/acceptor. Lys-165 (schiff-base intermediate with acetaldehyde) is an active-site residue. The active-site Proton donor/acceptor is the Lys-199.

This sequence belongs to the DeoC/FbaB aldolase family. DeoC type 2 subfamily.

Its subcellular location is the cytoplasm. The catalysed reaction is 2-deoxy-D-ribose 5-phosphate = D-glyceraldehyde 3-phosphate + acetaldehyde. It functions in the pathway carbohydrate degradation; 2-deoxy-D-ribose 1-phosphate degradation; D-glyceraldehyde 3-phosphate and acetaldehyde from 2-deoxy-alpha-D-ribose 1-phosphate: step 2/2. Its function is as follows. Catalyzes a reversible aldol reaction between acetaldehyde and D-glyceraldehyde 3-phosphate to generate 2-deoxy-D-ribose 5-phosphate. This Vibrio vulnificus (strain CMCP6) protein is Deoxyribose-phosphate aldolase.